Consider the following 156-residue polypeptide: SsrA-binding protein (156 aa).

Belongs to the SmpB family.

The protein resides in the cytoplasm. In terms of biological role, required for rescue of stalled ribosomes mediated by trans-translation. Binds to transfer-messenger RNA (tmRNA), required for stable association of tmRNA with ribosomes. tmRNA and SmpB together mimic tRNA shape, replacing the anticodon stem-loop with SmpB. tmRNA is encoded by the ssrA gene; the 2 termini fold to resemble tRNA(Ala) and it encodes a 'tag peptide', a short internal open reading frame. During trans-translation Ala-aminoacylated tmRNA acts like a tRNA, entering the A-site of stalled ribosomes, displacing the stalled mRNA. The ribosome then switches to translate the ORF on the tmRNA; the nascent peptide is terminated with the 'tag peptide' encoded by the tmRNA and targeted for degradation. The ribosome is freed to recommence translation, which seems to be the essential function of trans-translation. This is SsrA-binding protein from Staphylococcus haemolyticus (strain JCSC1435).